Here is a 271-residue protein sequence, read N- to C-terminus: MTYLQESSRPAVTVPKLQAMRDAGEKIAMLTCYDASFSALLDRAGTDVLLIGDSLGNVLQGHTTTLPVSIDDIAYHTACVARAQPRALVVADLPFGTYGTPVDAFANAVKLMRAGAQMVKLEGGEWLADTIRFLVERSVPVCAHLGLTPQSVHAFGGFKVQGKTEAGAAQLLRDARAIEDAGAQLVVLEAVPTLVAAEVTHMLKIPTIGIGAGVDCSGQVLVLHDMLGVFPGKRPRFVKDFMQGQPNIQAAVEAYVSAVKDRSFPGPEHSF.

Residues Asp53 and Asp92 each coordinate Mg(2+). 3-methyl-2-oxobutanoate contacts are provided by residues 53–54 (DS), Asp92, and Lys120. Glu122 contributes to the Mg(2+) binding site. Glu189 functions as the Proton acceptor in the catalytic mechanism.

The protein belongs to the PanB family. As to quaternary structure, homodecamer; pentamer of dimers. The cofactor is Mg(2+).

Its subcellular location is the cytoplasm. It catalyses the reaction 3-methyl-2-oxobutanoate + (6R)-5,10-methylene-5,6,7,8-tetrahydrofolate + H2O = 2-dehydropantoate + (6S)-5,6,7,8-tetrahydrofolate. It functions in the pathway cofactor biosynthesis; (R)-pantothenate biosynthesis; (R)-pantoate from 3-methyl-2-oxobutanoate: step 1/2. In terms of biological role, catalyzes the reversible reaction in which hydroxymethyl group from 5,10-methylenetetrahydrofolate is transferred onto alpha-ketoisovalerate to form ketopantoate. The sequence is that of 3-methyl-2-oxobutanoate hydroxymethyltransferase 1 from Burkholderia cenocepacia (strain HI2424).